Consider the following 156-residue polypeptide: MAIRRIEGLLHLASEGRYAILVGRFNSFVVEHLLEGAIDTLKRHGVSEDNITVAYAPGAWELPIVAKKLAASDKFDAIIALGAVIRGSTPHFDFVAGECAKGLGVVALESSLPVINGVLTTDSIEQAIERSGTKAGNKGSEAALTAIEMVNLLKAI.

Residues phenylalanine 25, 59 to 61 (AWE), and 83 to 85 (AVI) each bind 5-amino-6-(D-ribitylamino)uracil. (2S)-2-hydroxy-3-oxobutyl phosphate is bound at residue 88–89 (ST). Histidine 91 serves as the catalytic Proton donor. Asparagine 116 contacts 5-amino-6-(D-ribitylamino)uracil. Arginine 130 is a (2S)-2-hydroxy-3-oxobutyl phosphate binding site.

This sequence belongs to the DMRL synthase family. In terms of assembly, forms an icosahedral capsid composed of 60 subunits, arranged as a dodecamer of pentamers.

It catalyses the reaction (2S)-2-hydroxy-3-oxobutyl phosphate + 5-amino-6-(D-ribitylamino)uracil = 6,7-dimethyl-8-(1-D-ribityl)lumazine + phosphate + 2 H2O + H(+). It participates in cofactor biosynthesis; riboflavin biosynthesis; riboflavin from 2-hydroxy-3-oxobutyl phosphate and 5-amino-6-(D-ribitylamino)uracil: step 1/2. Its function is as follows. Catalyzes the formation of 6,7-dimethyl-8-ribityllumazine by condensation of 5-amino-6-(D-ribitylamino)uracil with 3,4-dihydroxy-2-butanone 4-phosphate. This is the penultimate step in the biosynthesis of riboflavin. The protein is 6,7-dimethyl-8-ribityllumazine synthase of Acinetobacter baylyi (strain ATCC 33305 / BD413 / ADP1).